We begin with the raw amino-acid sequence, 65 residues long: uncharacterized protein (65 aa).

The interval 24-65 (NNNNNNNNNNNNNNNNNNNNNNNNNNNNNNNKNNKNNNKNND) is disordered.

This is an uncharacterized protein from Dictyostelium discoideum (Social amoeba).